Reading from the N-terminus, the 1463-residue chain is DNA polymerase III PolC-type (1463 aa).

One can recognise an Exonuclease domain in the interval 425-581; that stretch reads YVVFDVETTG…YDAEATGRLL (157 aa).

Belongs to the DNA polymerase type-C family. PolC subfamily.

Its subcellular location is the cytoplasm. It carries out the reaction DNA(n) + a 2'-deoxyribonucleoside 5'-triphosphate = DNA(n+1) + diphosphate. In terms of biological role, required for replicative DNA synthesis. This DNA polymerase also exhibits 3' to 5' exonuclease activity. The sequence is that of DNA polymerase III PolC-type from Streptococcus pneumoniae serotype 4 (strain ATCC BAA-334 / TIGR4).